Consider the following 253-residue polypeptide: 2-C-methyl-D-erythritol 4-phosphate cytidylyltransferase (253 aa).

The protein belongs to the IspD/TarI cytidylyltransferase family. IspD subfamily.

The enzyme catalyses 2-C-methyl-D-erythritol 4-phosphate + CTP + H(+) = 4-CDP-2-C-methyl-D-erythritol + diphosphate. The protein operates within isoprenoid biosynthesis; isopentenyl diphosphate biosynthesis via DXP pathway; isopentenyl diphosphate from 1-deoxy-D-xylulose 5-phosphate: step 2/6. Catalyzes the formation of 4-diphosphocytidyl-2-C-methyl-D-erythritol from CTP and 2-C-methyl-D-erythritol 4-phosphate (MEP). The protein is 2-C-methyl-D-erythritol 4-phosphate cytidylyltransferase of Chlorobium chlorochromatii (strain CaD3).